Here is a 494-residue protein sequence, read N- to C-terminus: MSLLAEDTAAADLGLRWKPGFRALGPAFLTELRPTPLPDPPYWVGHSEAAARLLGLPADWRQSEGTLAALTGNLPVAGTLPFATVYSGHQFGVWAGQLGDGRAIMLGETEGGLEVQLKGAGRTPYSRGADGRAVLRSSIREFLCSEAMHGLGIPTTRALCVTGSDARVYREMPETAAVVTRVAPSFIRFGHFEHFSASQRDAELRALADYVIDRYYPDCRSTSRFNGNAYAAFLEAVSERTAALLAQWQAVGFCHGVMNTDNMSILGLTIDYGPFQFLDGFDPRHICNHSDTSGRYAFNQQPNVAYWNLFCLAQALLPLIGDQEIAVAALESYKTVFPREFESRMRAKLGLAEPAEGDRALIEGVLKLMAAEKVDYTIFWRRLSQHMAGGNAEPVRDLFLDRAGFDAWLLSFSERHAQLPRAQAADLMLRSNPKYVLRNHLGQQAIEAASQKDFSAVATLLALLETPFEEHPGADAYAGFPPDWASTIEISCSS.

Positions 99, 101, 102, 118, 130, 131, 181, and 188 each coordinate ATP. Asp-261 (proton acceptor) is an active-site residue. 2 residues coordinate Mg(2+): Asn-262 and Asp-271. Asp-271 provides a ligand contact to ATP.

Belongs to the SELO family. The cofactor is Mg(2+). Mn(2+) is required as a cofactor.

The enzyme catalyses L-seryl-[protein] + ATP = 3-O-(5'-adenylyl)-L-seryl-[protein] + diphosphate. The catalysed reaction is L-threonyl-[protein] + ATP = 3-O-(5'-adenylyl)-L-threonyl-[protein] + diphosphate. It catalyses the reaction L-tyrosyl-[protein] + ATP = O-(5'-adenylyl)-L-tyrosyl-[protein] + diphosphate. It carries out the reaction L-histidyl-[protein] + UTP = N(tele)-(5'-uridylyl)-L-histidyl-[protein] + diphosphate. The enzyme catalyses L-seryl-[protein] + UTP = O-(5'-uridylyl)-L-seryl-[protein] + diphosphate. The catalysed reaction is L-tyrosyl-[protein] + UTP = O-(5'-uridylyl)-L-tyrosyl-[protein] + diphosphate. In terms of biological role, nucleotidyltransferase involved in the post-translational modification of proteins. It can catalyze the addition of adenosine monophosphate (AMP) or uridine monophosphate (UMP) to a protein, resulting in modifications known as AMPylation and UMPylation. The sequence is that of Protein nucleotidyltransferase YdiU from Variovorax paradoxus (strain S110).